Consider the following 534-residue polypeptide: Beta-glucosidase 31 (534 aa).

A signal peptide spans 1–22 (MAIKLIALVITLCVASWDVAQG). Glutamine 51 lines the a beta-D-glucoside pocket. Asparagine 68 carries an N-linked (GlcNAc...) asparagine glycan. Residues histidine 154 and 199 to 200 (NE) each bind a beta-D-glucoside. The active-site Proton donor is glutamate 200. Cysteine 219 and cysteine 227 are disulfide-bonded. Residue tyrosine 344 coordinates a beta-D-glucoside. Asparagine 374 carries an N-linked (GlcNAc...) asparagine glycan. Glutamate 417 lines the a beta-D-glucoside pocket. The Nucleophile role is filled by glutamate 417. Asparagine 425 is a glycosylation site (N-linked (GlcNAc...) asparagine). A beta-D-glucoside is bound by residues tryptophan 467, 474-475 (EW), and phenylalanine 483.

The protein belongs to the glycosyl hydrolase 1 family.

The catalysed reaction is Hydrolysis of terminal, non-reducing beta-D-glucosyl residues with release of beta-D-glucose.. This is Beta-glucosidase 31 from Arabidopsis thaliana (Mouse-ear cress).